We begin with the raw amino-acid sequence, 1613 residues long: Reverse gyrase (1613 aa).

An RG N-terminal-type zinc finger spans residues 1–38; it reads MIPMIYKEMCPNCNGEITSERLAIGVCEKCLKEENVFE. Residues cysteine 10, cysteine 13, cysteine 27, and cysteine 30 each contribute to the Zn(2+) site. Residues glutamine 83 and 100-107 each bind ATP; that span reads VPTGVGKS. In terms of domain architecture, Helicase ATP-binding spans 87–291; it reads AKRVLKNKSF…LYRELLDFEI (205 aa). The DEAD box signature appears at 203 to 206; that stretch reads DDVD. Residues 310 to 525 enclose the Helicase C-terminal domain; sequence SKEKILEYIK…IDEVNLEELI (216 aa). The topoisomerase I stretch occupies residues 546–1613; that stretch reads DLLKSVLMVV…ALHEEILSIR (1068 aa). The region spanning 550-712 is the Toprim domain; it reads SVLMVVESPN…NIYRVGFNEI (163 aa). Mg(2+) is bound by residues glutamate 556 and aspartate 681. A Topo IA-type catalytic domain is found at 733–1613; the sequence is DENKVKGQVV…ALHEEILSIR (881 aa). Residues 1070–1199 form the DOD-type homing endonuclease domain; that stretch reads FAGLVLGDGS…IGIYLNSIGI (130 aa). Residue tyrosine 1363 is the O-(5'-phospho-DNA)-tyrosine intermediate of the active site.

In the N-terminal section; belongs to the DEAD box helicase family. DDVD subfamily. The protein in the C-terminal section; belongs to the type IA topoisomerase family. As to quaternary structure, monomer. Requires Zn(2+) as cofactor. The cofactor is Mg(2+). This protein undergoes a protein self splicing that involves a post-translational excision of the intervening region (intein) followed by peptide ligation.

The protein resides in the cytoplasm. The catalysed reaction is ATP + H2O = ADP + phosphate + H(+). Modifies the topological state of DNA by introducing positive supercoils in an ATP-dependent process, increasing the linking number in steps of +1. Binds to single-stranded DNA, transiently cleaves and then rejoins the ends, introducing a positive supercoil in the process. The scissile phosphodiester is attacked by the catalytic tyrosine of the enzyme, resulting in the formation of a DNA-(5'-phosphotyrosyl)-enzyme intermediate. Probably involved in rewinding DNA strands in regions of the chromosome that have opened up to allow replication, transcription, DNA repair and/or for DNA protection. This Methanocaldococcus jannaschii (strain ATCC 43067 / DSM 2661 / JAL-1 / JCM 10045 / NBRC 100440) (Methanococcus jannaschii) protein is Reverse gyrase.